The primary structure comprises 446 residues: Protein odr-4 homolog (446 aa).

Residues 76-96 (ASQVGRMLPGGLMVLGVFLMT) form a helical membrane-spanning segment. The segment covering 394 to 415 (HPEKRESEPASQHLESKPENKA) has biased composition (basic and acidic residues). The interval 394-417 (HPEKRESEPASQHLESKPENKARS) is disordered. A helical transmembrane segment spans residues 426-446 (GLVISTIVASIAIIISFYYIM).

The protein belongs to the ODR-4 family.

Its subcellular location is the membrane. Its function is as follows. May play a role in the trafficking of a subset of G-protein coupled receptors. This is Protein odr-4 homolog (odr4) from Xenopus laevis (African clawed frog).